Consider the following 356-residue polypeptide: uncharacterized protein (356 aa).

It localises to the cytoplasm. The protein resides in the nucleus. This is an uncharacterized protein from Saccharomyces cerevisiae (strain ATCC 204508 / S288c) (Baker's yeast).